The following is an 82-amino-acid chain: Sigma-G-dependent sporulation-specific SASP protein (82 aa).

This is Sigma-G-dependent sporulation-specific SASP protein from Bacillus subtilis (strain 168).